The primary structure comprises 177 residues: MTTAIASDRLKKRFDRWDFDGNGALERADFEKEAQHIAEAFGKDAGAAEVQTLKNAFGGLFDYLAKEAGVGSDGSLTEEQFIRVTENLIFEQGEASFNRVLGPVVKGTWGMCDKNADGQINADEFAAWLTALGMSKAEAAEAFNQVDTNGNGELSLDELLTAVRDFHFGRLDVELLG.

EF-hand domains follow at residues 5–40 (IASD…IAEA), 45–90 (AGAA…NLIF), 100–134 (VLGP…ALGM), and 134–169 (MSKA…FHFG). The Ca(2+) site is built by aspartate 18, aspartate 20, asparagine 22, and aspartate 29. Positions 113, 115, 117, 119, 124, 147, 149, 151, 153, and 158 each coordinate Ca(2+).

The chain is Calerythrin from Saccharopolyspora erythraea (Streptomyces erythraeus).